A 597-amino-acid chain; its full sequence is Elongation factor 4 (597 aa).

One can recognise a tr-type G domain in the interval 2 to 184 (KNIRNFSIIA…RLVRDIPAPE (183 aa)). Residues 14–19 (DHGKST) and 131–134 (NKID) each bind GTP.

It belongs to the TRAFAC class translation factor GTPase superfamily. Classic translation factor GTPase family. LepA subfamily.

It is found in the cell inner membrane. The enzyme catalyses GTP + H2O = GDP + phosphate + H(+). In terms of biological role, required for accurate and efficient protein synthesis under certain stress conditions. May act as a fidelity factor of the translation reaction, by catalyzing a one-codon backward translocation of tRNAs on improperly translocated ribosomes. Back-translocation proceeds from a post-translocation (POST) complex to a pre-translocation (PRE) complex, thus giving elongation factor G a second chance to translocate the tRNAs correctly. Binds to ribosomes in a GTP-dependent manner. This chain is Elongation factor 4, found in Edwardsiella ictaluri (strain 93-146).